The chain runs to 293 residues: Elongation factor Ts (293 aa).

The segment at Thr-81–Val-84 is involved in Mg(2+) ion dislocation from EF-Tu.

Belongs to the EF-Ts family.

The protein localises to the cytoplasm. Associates with the EF-Tu.GDP complex and induces the exchange of GDP to GTP. It remains bound to the aminoacyl-tRNA.EF-Tu.GTP complex up to the GTP hydrolysis stage on the ribosome. The polypeptide is Elongation factor Ts (Thioalkalivibrio sulfidiphilus (strain HL-EbGR7)).